Here is an 87-residue protein sequence, read N- to C-terminus: MENKAYMYVLECGDGSLYTGYTTDVQARLKKHQAGKGAKYTRARLPVTLLYQEEHPSKPAAMSAEALFKKKTRQAKLAYIKERTQNA.

The GIY-YIG domain maps to 3–78 (NKAYMYVLEC…KKKTRQAKLA (76 aa)).

It belongs to the UPF0213 family.

This Streptococcus sanguinis (strain SK36) protein is UPF0213 protein SSA_0709.